The following is a 326-amino-acid chain: Nucleotide sugar transporter SLC35D2 (326 aa).

The Extracellular segment spans residues 1–15 (MEEPNAAPLPSRLAR). Residues 16-36 (LLSALFYGTCSFLIVLVNKAL) traverse the membrane as a helical segment. Topologically, residues 37–41 (LTTYG) are cytoplasmic. Residues 42-62 (FPSPIVLGIGQMATTIMILYV) traverse the membrane as a helical segment. The Extracellular portion of the chain corresponds to 63 to 130 (FKLNKIIHFP…LLEAIILGTQ (68 aa)). Residues 131 to 151 (YSLNIILSVLAIVLGAFIAAG) traverse the membrane as a helical segment. Topologically, residues 152 to 155 (SDLT) are cytoplasmic. Residues 156 to 176 (FNLEGYVFVFLNDIFTAANGV) form a helical membrane-spanning segment. Topologically, residues 177 to 189 (YTKQKMDPKELGK) are extracellular. The helical transmembrane segment at 190-210 (YGVLFYNACFMLIPTVIISVS) threads the bilayer. The Cytoplasmic segment spans residues 211–225 (TGDFQQATEFRHWKN). Residues 226–246 (VLFIIQFLLSCLLGFLLMYST) form a helical membrane-spanning segment. Residues 247–253 (ALCSYYN) lie on the Extracellular side of the membrane. The chain crosses the membrane as a helical span at residues 254 to 276 (SALTTAVVGAIKNVSVAYIGMLV). Over 277–280 (GGDY) the chain is Cytoplasmic. A helical membrane pass occupies residues 281-303 (IFSLLNFIGLNICMAGGLRYSFL). Residues 304 to 326 (TLSSQLKPKQPVDEESIPLDLKS) are Extracellular-facing.

The protein belongs to the TPT transporter family. SLC35D subfamily.

It localises to the golgi apparatus membrane. It carries out the reaction UMP(out) + UDP-N-acetyl-alpha-D-glucosamine(in) = UMP(in) + UDP-N-acetyl-alpha-D-glucosamine(out). The catalysed reaction is UMP(out) + UDP-alpha-D-glucose(in) = UMP(in) + UDP-alpha-D-glucose(out). Functionally, nucleotide sugar antiporter transporting UDP-N-acetylglucosamine (UDP-GlcNAc) and UDP-glucose (UDP-Glc) from the cytosol into the lumen of the Golgi in exchange of UMP. By supplying UDP-N-acetylglucosamine, a donor substrate to heparan sulfate synthases, probably takes part in the synthesis of these glycoconjugates. In Mus musculus (Mouse), this protein is Nucleotide sugar transporter SLC35D2.